A 59-amino-acid chain; its full sequence is Small, acid-soluble spore protein H 1 (59 aa).

The protein belongs to the SspH family.

The protein resides in the spore core. The sequence is that of Small, acid-soluble spore protein H 1 (sspH1) from Bacillus anthracis.